The chain runs to 238 residues: Ribonuclease PH (238 aa).

Residues Arg-86 and 124–126 (GTR) contribute to the phosphate site.

The protein belongs to the RNase PH family. In terms of assembly, homohexameric ring arranged as a trimer of dimers.

The catalysed reaction is tRNA(n+1) + phosphate = tRNA(n) + a ribonucleoside 5'-diphosphate. Its function is as follows. Phosphorolytic 3'-5' exoribonuclease that plays an important role in tRNA 3'-end maturation. Removes nucleotide residues following the 3'-CCA terminus of tRNAs; can also add nucleotides to the ends of RNA molecules by using nucleoside diphosphates as substrates, but this may not be physiologically important. Probably plays a role in initiation of 16S rRNA degradation (leading to ribosome degradation) during starvation. The polypeptide is Ribonuclease PH (Phenylobacterium zucineum (strain HLK1)).